Consider the following 275-residue polypeptide: Protein CIMAP1C (275 aa).

STPGR repeat units follow at residues 200–225 (PGPA…MAKR) and 236–261 (PGPG…MGIK).

It belongs to the CIMAP family.

The polypeptide is Protein CIMAP1C (CIMAP1C) (Mus musculus (Mouse)).